We begin with the raw amino-acid sequence, 359 residues long: 3-isopropylmalate dehydrogenase (359 aa).

Arginine 96, arginine 106, arginine 134, and aspartate 223 together coordinate substrate. Mg(2+)-binding residues include aspartate 223, aspartate 247, and aspartate 251. 281-293 contacts NAD(+); the sequence is GSAPDIAGQGIAN.

Belongs to the isocitrate and isopropylmalate dehydrogenases family. LeuB type 1 subfamily. Homodimer. It depends on Mg(2+) as a cofactor. Mn(2+) serves as cofactor.

Its subcellular location is the cytoplasm. It carries out the reaction (2R,3S)-3-isopropylmalate + NAD(+) = 4-methyl-2-oxopentanoate + CO2 + NADH. It functions in the pathway amino-acid biosynthesis; L-leucine biosynthesis; L-leucine from 3-methyl-2-oxobutanoate: step 3/4. Functionally, catalyzes the oxidation of 3-carboxy-2-hydroxy-4-methylpentanoate (3-isopropylmalate) to 3-carboxy-4-methyl-2-oxopentanoate. The product decarboxylates to 4-methyl-2 oxopentanoate. The sequence is that of 3-isopropylmalate dehydrogenase from Chromohalobacter salexigens (strain ATCC BAA-138 / DSM 3043 / CIP 106854 / NCIMB 13768 / 1H11).